The sequence spans 360 residues: MSKQILILPGDGIGPEIMTEAVKVLELANQKYQLGFELTHDVIGGAAIDKHGVPLADETLDRARAADAVLLGAVGGPKWDTIERDIRPERGLLKIRSQLGLFGNLRPAILYPQLADASSLKPEIVAGLDILIVRELTGGIYFGAPRGTRVLDNGERQAYDTLPYSESEIRRIAKVGFDMAMVRGKKLCSVDKANVLASSQLWREIVEQVAKDYPEVELSHLYVDNAAMQLVRAPKQFDVIVTDNLFGDILSDQASMLTGSIGMLPSASLDTANKGMYEPCHGSAPDIAGQGIANPLATILSVSMMLRYSFNLTAAADAIEQAVSLVLDQGIRTGDIWSEGKVKVGTKEMGDAVVAALRNL.

76–89 (GPKWDTIERDIRPE) serves as a coordination point for NAD(+). Residues Arg-96, Arg-106, Arg-134, and Asp-224 each contribute to the substrate site. Positions 224, 248, and 252 each coordinate Mg(2+). 282–294 (GSAPDIAGQGIAN) contributes to the NAD(+) binding site.

It belongs to the isocitrate and isopropylmalate dehydrogenases family. LeuB type 1 subfamily. Homodimer. The cofactor is Mg(2+). It depends on Mn(2+) as a cofactor.

Its subcellular location is the cytoplasm. It catalyses the reaction (2R,3S)-3-isopropylmalate + NAD(+) = 4-methyl-2-oxopentanoate + CO2 + NADH. It functions in the pathway amino-acid biosynthesis; L-leucine biosynthesis; L-leucine from 3-methyl-2-oxobutanoate: step 3/4. In terms of biological role, catalyzes the oxidation of 3-carboxy-2-hydroxy-4-methylpentanoate (3-isopropylmalate) to 3-carboxy-4-methyl-2-oxopentanoate. The product decarboxylates to 4-methyl-2 oxopentanoate. This is 3-isopropylmalate dehydrogenase from Pseudomonas syringae pv. tomato (strain ATCC BAA-871 / DC3000).